The sequence spans 142 residues: Ribosome-binding factor A (142 aa).

The disordered stretch occupies residues 123–142; that stretch reads VQRDLDSAPEDDEPETGTGH. The segment covering 129–142 has biased composition (acidic residues); it reads SAPEDDEPETGTGH.

This sequence belongs to the RbfA family. Monomer. Binds 30S ribosomal subunits, but not 50S ribosomal subunits or 70S ribosomes.

It is found in the cytoplasm. In terms of biological role, one of several proteins that assist in the late maturation steps of the functional core of the 30S ribosomal subunit. Associates with free 30S ribosomal subunits (but not with 30S subunits that are part of 70S ribosomes or polysomes). Required for efficient processing of 16S rRNA. May interact with the 5'-terminal helix region of 16S rRNA. In Methylobacterium radiotolerans (strain ATCC 27329 / DSM 1819 / JCM 2831 / NBRC 15690 / NCIMB 10815 / 0-1), this protein is Ribosome-binding factor A.